The following is a 266-amino-acid chain: Glutamate racemase (266 aa).

Substrate contacts are provided by residues 9 to 10 (DS) and 41 to 42 (YG). The active-site Proton donor/acceptor is the Cys-73. 74–75 (NS) lines the substrate pocket. The active-site Proton donor/acceptor is Cys-183. Substrate is bound at residue 184–185 (TH).

It belongs to the aspartate/glutamate racemases family.

It carries out the reaction L-glutamate = D-glutamate. It participates in cell wall biogenesis; peptidoglycan biosynthesis. In terms of biological role, provides the (R)-glutamate required for cell wall biosynthesis. The protein is Glutamate racemase of Shewanella halifaxensis (strain HAW-EB4).